The following is a 171-amino-acid chain: MSALDNKAVRGYIQKLVGDEGMAVVEKMIEKVPDQEVTDEQVAQISGINLNLVRKTLYILYENHLAMYRRERDKDSGWLTYLWKLDLDNSVHMLRNEARKLIKKLERRLEFESNEFYICQEEAPHRILFDYAMETNFVCPVDETPLMHYDNTAEKQALRNRIDDLKKSLAQ.

Residues 5-91 (DNKAVRGYIQ…LWKLDLDNSV (87 aa)) enclose the HTH TFE/IIEalpha-type domain.

Belongs to the TFE family. In terms of assembly, monomer. Interaction with RNA polymerase subunits RpoF and RpoE is necessary for Tfe stimulatory transcription activity. Able to interact with Tbp and RNA polymerase in the absence of DNA promoter. Interacts both with the preinitiation and elongation complexes.

Transcription factor that plays a role in the activation of archaeal genes transcribed by RNA polymerase. Facilitates transcription initiation by enhancing TATA-box recognition by TATA-box-binding protein (Tbp), and transcription factor B (Tfb) and RNA polymerase recruitment. Not absolutely required for transcription in vitro, but particularly important in cases where Tbp or Tfb function is not optimal. It dynamically alters the nucleic acid-binding properties of RNA polymerases by stabilizing the initiation complex and destabilizing elongation complexes. Seems to translocate with the RNA polymerase following initiation and acts by binding to the non template strand of the transcription bubble in elongation complexes. This is Transcription factor E from Methanocella arvoryzae (strain DSM 22066 / NBRC 105507 / MRE50).